We begin with the raw amino-acid sequence, 529 residues long: Glycylpeptide N-tetradecanoyltransferase (529 aa).

A compositionally biased stretch (polar residues) spans 1–10 (MSEQEGNQSE). The tract at residues 1–65 (MSEQEGNQSE…ANPATKLTPS (65 aa)) is disordered. Residues 11 to 23 (HQSEHVGESEGKL) are compositionally biased toward basic and acidic residues. The span at 26-40 (ETPTTSQSTNASTGT) shows a compositional bias: polar residues. Tetradecanoyl-CoA is bound by residues 118-121 (FKFW), 252-254 (LCV), and 260-264 (SKRLT). Residue V529 is the Proton acceptor; via carboxylate of the active site.

Belongs to the NMT family. In terms of assembly, monomer.

The protein resides in the cytoplasm. The enzyme catalyses N-terminal glycyl-[protein] + tetradecanoyl-CoA = N-tetradecanoylglycyl-[protein] + CoA + H(+). In terms of biological role, adds a myristoyl group to the N-terminal glycine residue of certain cellular proteins. The chain is Glycylpeptide N-tetradecanoyltransferase from Ajellomyces capsulatus (Darling's disease fungus).